A 324-amino-acid polypeptide reads, in one-letter code: Adenine deaminase (324 aa).

Histidine 11, histidine 13, and histidine 189 together coordinate Zn(2+). The active-site Proton donor is glutamate 192. Residue aspartate 270 coordinates Zn(2+). Aspartate 271 is a substrate binding site.

The protein belongs to the metallo-dependent hydrolases superfamily. Adenosine and AMP deaminases family. Adenine deaminase type 2 subfamily. The cofactor is Zn(2+).

It carries out the reaction adenine + H2O + H(+) = hypoxanthine + NH4(+). Catalyzes the hydrolytic deamination of adenine to hypoxanthine. Plays an important role in the purine salvage pathway and in nitrogen catabolism. The polypeptide is Adenine deaminase (Sinorhizobium fredii (strain NBRC 101917 / NGR234)).